The chain runs to 295 residues: MDSHRPVLLNEMLELLSPKDGAVYVDATFGGGGYSRGILERAKCTVLAIDQDPIASEFYQSLHSQFPGRVHFFLSKFSRLREALQHFDHNQVDGVVFDVGVSSMQLSDPDRGFSFMKEGPLDMRMDMLRSQSKSAATFVNSLSEKDMADVIFYYGGERLSRRVTRAIISARESNNKIRNTSDLAKIIRSVVPRSKANPIDPATRTFQAIRIWVNDELEELKAGLEAASQIVGVGGKIIVTSFHSLEDRIVKHKFNALREKGFQLINKKAIKPTEKEISENTRSRSAKLRGIVKEE.

Residues 32 to 34 (GGY), D50, F77, D98, and Q105 contribute to the S-adenosyl-L-methionine site. Residues 275 to 295 (KEISENTRSRSAKLRGIVKEE) are disordered.

Belongs to the methyltransferase superfamily. RsmH family.

It localises to the cytoplasm. The catalysed reaction is cytidine(1402) in 16S rRNA + S-adenosyl-L-methionine = N(4)-methylcytidine(1402) in 16S rRNA + S-adenosyl-L-homocysteine + H(+). Its function is as follows. Specifically methylates the N4 position of cytidine in position 1402 (C1402) of 16S rRNA. The chain is Ribosomal RNA small subunit methyltransferase H from Anaplasma phagocytophilum (strain HZ).